The chain runs to 631 residues: ATP-dependent zinc metalloprotease FtsH (631 aa).

Over methionine 1–asparagine 5 the chain is Cytoplasmic. Residues proline 6 to alanine 26 traverse the membrane as a helical segment. Residues arginine 27–glycine 102 are Periplasmic-facing. Residues tryptophan 103–tryptophan 123 traverse the membrane as a helical segment. Over methionine 124–serine 631 the chain is Cytoplasmic. Glycine 196–threonine 203 is an ATP binding site. Position 418 (histidine 418) interacts with Zn(2+). Residue glutamate 419 is part of the active site. Residues histidine 422 and aspartate 494 each coordinate Zn(2+).

The protein in the central section; belongs to the AAA ATPase family. In the C-terminal section; belongs to the peptidase M41 family. As to quaternary structure, homohexamer. Requires Zn(2+) as cofactor.

It is found in the cell inner membrane. Its function is as follows. Acts as a processive, ATP-dependent zinc metallopeptidase for both cytoplasmic and membrane proteins. Plays a role in the quality control of integral membrane proteins. In Endomicrobium trichonymphae, this protein is ATP-dependent zinc metalloprotease FtsH.